The primary structure comprises 763 residues: Amyloid beta precursor like protein 2 (763 aa).

Residues 1 to 31 form the signal peptide; sequence MAATGTAAAAATGRLLLLLLVGLTAPALALA. The Extracellular segment spans residues 32-692; that stretch reads GYIEALAANA…PLREDFSLSS (661 aa). The GFLD subdomain stretch occupies residues 46 to 139; that stretch reads AVAEPQIAMF…PFKCLVGEFV (94 aa). Residues 46 to 205 form the E1 domain; that stretch reads AVAEPQIAMF…HGTEYVCCPQ (160 aa). 6 disulfide bridges follow: C56/C80, C91/C133, C116/C123, C149/C203, C160/C190, and C174/C202. Positions 147 to 205 are cuBD subdomain; that stretch reads EKCQFFHKERMEVCENHQHWHTVVKEACLTQGMTLYSYGMLLPCGVDQFHGTEYVCCPQ. Positions 163, 167, and 184 each coordinate Cu cation. Residues 211–299 are disordered; the sequence is SVSKEEEEED…EPGSDGTMSD (89 aa). Acidic residues-rich tracts occupy residues 215–233 and 242–269; these read EEEEEDEEEEEEEDEEEDY and TEADLEDFTEAAVDEDDEDEEEGEEVVE. Positions 270-282 are enriched in basic and acidic residues; that stretch reads DRDYYYDTFKGDD. The BPTI/Kunitz inhibitor domain maps to 306–364; it reads VKAVCSQEAMTGPCRAVMPRWYFDLSKGKCVRFIYGGCGGNRNNFESEDYCMAVCKAMI. Intrachain disulfides connect C310/C360, C319/C343, and C335/C356. In terms of domain architecture, E2 spans 373 to 564; sequence DVDVYFETSA…QEIQEEIDEL (192 aa). S590 bears the Phosphoserine; by FAM20C mark. An O-linked (Xyl...) (chondroitin sulfate) serine glycan is attached at S626. Residues 693 to 716 form a helical membrane-spanning segment; sequence SALIGLLVIAVAIATVIVISLVML. The Cytoplasmic portion of the chain corresponds to 717-763; sequence RKRQYGTISHGIVEVDPMLTPEERHLNKMQNHGYENPTYKYLEQMQI. The interval 749–763 is interaction with DAB2; it reads GYENPTYKYLEQMQI. Residues 750–755 carry the NPXY motif motif; it reads YENPTY.

It belongs to the APP family. In terms of assembly, interacts with CPEB1. Interacts (via NPXY motif) with DAB2 (via PID domain); the interaction is impaired by tyrosine phosphorylation of the NPXY motif. Interacts (via cytoplasmic domain) with APBB2/FE65L. Interacts (via intracellular domain) with APBB3/FE65L2. Post-translationally, the BPTI/Kunitz inhibitor domain is O-glycosylated. In terms of tissue distribution, expressed in placenta, brain, heart, lung, liver, kidney and endothelial tissues.

It is found in the cell membrane. The protein localises to the nucleus. In terms of biological role, may play a role in the regulation of hemostasis. The soluble form may have inhibitory properties towards coagulation factors. May interact with cellular G-protein signaling pathways. May bind to the DNA 5'-GTCACATG-3'(CDEI box). Inhibits trypsin, chymotrypsin, plasmin, factor XIA and plasma and glandular kallikrein. Modulates the Cu/Zn nitric oxide-catalyzed autodegradation of GPC1 heparan sulfate side chains in fibroblasts. In Homo sapiens (Human), this protein is Amyloid beta precursor like protein 2.